Here is a 292-residue protein sequence, read N- to C-terminus: Shikimate dehydrogenase (NADP(+)) (292 aa).

Shikimate contacts are provided by residues Ser22–Ser24 and Ser69. Catalysis depends on Lys73, which acts as the Proton acceptor. Shikimate is bound by residues Asn94 and Asp111. NADP(+)-binding positions include Gly135–Ala139 and Ile236. Tyr238 is a shikimate binding site. Gly260 provides a ligand contact to NADP(+).

This sequence belongs to the shikimate dehydrogenase family. In terms of assembly, homodimer.

The catalysed reaction is shikimate + NADP(+) = 3-dehydroshikimate + NADPH + H(+). Its pathway is metabolic intermediate biosynthesis; chorismate biosynthesis; chorismate from D-erythrose 4-phosphate and phosphoenolpyruvate: step 4/7. Involved in the biosynthesis of the chorismate, which leads to the biosynthesis of aromatic amino acids. Catalyzes the reversible NADPH linked reduction of 3-dehydroshikimate (DHSA) to yield shikimate (SA). The polypeptide is Shikimate dehydrogenase (NADP(+)) (Streptococcus pyogenes serotype M2 (strain MGAS10270)).